The following is a 309-amino-acid chain: Large ribosomal subunit protein mL45 (309 aa).

Belongs to the mitochondrion-specific ribosomal protein mL45 family. Component of the mitochondrial ribosome large subunit (39S) which comprises a 16S rRNA and about 50 distinct proteins.

The protein resides in the mitochondrion. Component of the mitochondrial large ribosomal subunit (mt-LSU). Within the mitochondrial ribosomes, required to direct the nascent polypeptide toward the tunnel exit and position the exit at a distance from the membrane surface. The protein is Large ribosomal subunit protein mL45 (mrpl45) of Xenopus tropicalis (Western clawed frog).